We begin with the raw amino-acid sequence, 289 residues long: Diaminopimelate epimerase (289 aa).

Positions 11 and 78 each coordinate substrate. C87 acts as the Proton donor in catalysis. Substrate contacts are provided by residues 88–89 (GN), N163, N199, and 217–218 (ER). The Proton acceptor role is filled by C226. 227 to 228 (GT) lines the substrate pocket.

Belongs to the diaminopimelate epimerase family. In terms of assembly, homodimer.

It localises to the cytoplasm. It catalyses the reaction (2S,6S)-2,6-diaminopimelate = meso-2,6-diaminopimelate. The protein operates within amino-acid biosynthesis; L-lysine biosynthesis via DAP pathway; DL-2,6-diaminopimelate from LL-2,6-diaminopimelate: step 1/1. Its function is as follows. Catalyzes the stereoinversion of LL-2,6-diaminopimelate (L,L-DAP) to meso-diaminopimelate (meso-DAP), a precursor of L-lysine and an essential component of the bacterial peptidoglycan. The protein is Diaminopimelate epimerase of Mycobacterium bovis (strain ATCC BAA-935 / AF2122/97).